The chain runs to 288 residues: Ribosomal RNA small subunit methyltransferase I (288 aa).

This sequence belongs to the methyltransferase superfamily. RsmI family.

The protein localises to the cytoplasm. It catalyses the reaction cytidine(1402) in 16S rRNA + S-adenosyl-L-methionine = 2'-O-methylcytidine(1402) in 16S rRNA + S-adenosyl-L-homocysteine + H(+). Functionally, catalyzes the 2'-O-methylation of the ribose of cytidine 1402 (C1402) in 16S rRNA. The polypeptide is Ribosomal RNA small subunit methyltransferase I (Vibrio cholerae serotype O1 (strain ATCC 39315 / El Tor Inaba N16961)).